A 367-amino-acid polypeptide reads, in one-letter code: MLRRSIHTTKILQKPNATSHIWSDFTTRPSSLSIQSSKVKNYLFQKKASLDPPSISRRSNRIKYSPPEHIDEIFRMSYDFLEQRSSKFYELANKTKNPLKKDALLIKAEINNPEVQYNFQFNNKLNNVKDIIDYDVPVYRHLGKQHWESYGQMLLMQRLETLAAIPDTLPTLVPRAEVNIKFPFSTGVNKWIEPGEFLSSNVTSMRPIFKIQEYELVNVEKQLYTVLIVNPDVPDLSNDSFKTALCYGLVNINLTYNDNLIDPRKFHSSNIIADYLPPVPEKNAGKQRFVVWVFRQPLIEDKQGPNMLEIDRKELSRDDFDIRQFTKKYNLTAIGAHIWRSEWDAKVAAVREKYGLPPGRVFSRVRR.

The N-terminal 29 residues, 1-29, are a transit peptide targeting the mitochondrion; sequence MLRRSIHTTKILQKPNATSHIWSDFTTRP.

Belongs to the phosphatidylethanolamine-binding protein family. Mitochondrion-specific ribosomal protein mL38 subfamily. Component of the mitochondrial large ribosomal subunit (mt-LSU). Mature yeast 74S mitochondrial ribosomes consist of a small (37S) and a large (54S) subunit. The 37S small subunit contains a 15S ribosomal RNA (15S mt-rRNA) and 34 different proteins. The 54S large subunit contains a 21S rRNA (21S mt-rRNA) and 46 different proteins.

It is found in the mitochondrion. Functionally, component of the mitochondrial ribosome (mitoribosome), a dedicated translation machinery responsible for the synthesis of mitochondrial genome-encoded proteins, including at least some of the essential transmembrane subunits of the mitochondrial respiratory chain. The mitoribosomes are attached to the mitochondrial inner membrane and translation products are cotranslationally integrated into the membrane. The chain is Large ribosomal subunit protein mL38 (MRPL35) from Saccharomyces cerevisiae (strain ATCC 204508 / S288c) (Baker's yeast).